Consider the following 716-residue polypeptide: uncharacterized protein (716 aa).

Disordered stretches follow at residues 84 to 103 (SPSI…ERYP) and 153 to 189 (VTDE…SQGQ). Residue serine 97 is modified to Phosphoserine. Glycyl lysine isopeptide (Lys-Gly) (interchain with G-Cter in SUMO2) cross-links involve residues lysine 201, lysine 204, lysine 237, lysine 283, and lysine 626.

This is an uncharacterized protein from Mus musculus (Mouse).